The chain runs to 428 residues: Trigger factor (428 aa).

Positions 163–248 (GDTAVIDFEG…VHEVKAKQLP (86 aa)) constitute a PPIase FKBP-type domain.

The protein belongs to the FKBP-type PPIase family. Tig subfamily.

The protein resides in the cytoplasm. The catalysed reaction is [protein]-peptidylproline (omega=180) = [protein]-peptidylproline (omega=0). Functionally, involved in protein export. Acts as a chaperone by maintaining the newly synthesized protein in an open conformation. Functions as a peptidyl-prolyl cis-trans isomerase. The sequence is that of Trigger factor from Geobacillus thermodenitrificans (strain NG80-2).